Reading from the N-terminus, the 344-residue chain is Protein PopA1 (344 aa).

Disordered regions lie at residues 1-28, 58-108, 134-156, 211-242, and 268-311; these read MSVGNIQSPSNLPGLQNLNLNTNTNSQQ, SAGG…DANN, QPGGNDKGNGVGGANGAKGAGGQ, GNGVNGNQANGPQNAGDVNGANGADDGSEDQG, and GGGN…NLQS. Composition is skewed to low complexity over residues 8–28 and 65–83; these read SPSNLPGLQNLNLNTNTNSQQ and NTGNAPAKDGNANAGANDP. Polar residues predominate over residues 89–108; it reads SKSQGPQSANKTGNVDDANN. Over residues 138–156 the composition is skewed to gly residues; it reads NDKGNGVGGANGAKGAGGQ. A compositionally biased stretch (low complexity) spans 215-235; sequence NGNQANGPQNAGDVNGANGAD. Residues 268–279 are compositionally biased toward gly residues; the sequence is GGGNQAQGGSKG. Residues 280–294 show a composition bias toward low complexity; it reads AGNASPASGANPGAN. Residues 295–311 are compositionally biased toward polar residues; that stretch reads QPGSADDQSSGQNNLQS.

PopA2 and PopA3 are produced from PopA1.

The protein localises to the secreted. Acts as a specific hypersensitive response (HR) elicitor. Has activity on tobacco (non-host plant) and petunia but is without activity on tomato (host plant); PopA3 seems to be more active than a PopA1-PopA2 mixture. This Ralstonia nicotianae (strain ATCC BAA-1114 / GMI1000) (Ralstonia solanacearum) protein is Protein PopA1 (popA).